Here is a 96-residue protein sequence, read N- to C-terminus: Small ribosomal subunit protein bS6 (96 aa).

It belongs to the bacterial ribosomal protein bS6 family.

In terms of biological role, binds together with bS18 to 16S ribosomal RNA. The chain is Small ribosomal subunit protein bS6 from Streptococcus equi subsp. equi (strain 4047).